We begin with the raw amino-acid sequence, 322 residues long: Ubiquitin-conjugating enzyme E2 U (322 aa).

The 150-residue stretch at 4–153 (RAYLLLQRDF…LKLFNRPLQM (150 aa)) folds into the UBC core domain. Cys89 (glycyl thioester intermediate) is an active-site residue.

It belongs to the ubiquitin-conjugating enzyme family. Autoubiquitinated in vitro in the presence of UBR5.

It carries out the reaction S-ubiquitinyl-[E1 ubiquitin-activating enzyme]-L-cysteine + [E2 ubiquitin-conjugating enzyme]-L-cysteine = [E1 ubiquitin-activating enzyme]-L-cysteine + S-ubiquitinyl-[E2 ubiquitin-conjugating enzyme]-L-cysteine.. Its pathway is protein modification; protein ubiquitination. Functionally, catalyzes the covalent attachment of ubiquitin to other proteins. The sequence is that of Ubiquitin-conjugating enzyme E2 U (UBE2U) from Macaca fascicularis (Crab-eating macaque).